The sequence spans 476 residues: Protein DETOXIFICATION 1 (476 aa).

12 helical membrane-spanning segments follow: residues 35-55 (AAPMATVTIAQYLLPVISVMV), 66-86 (GVALANSFTNVTGFSIMCGLV), 117-137 (IPICFLISILWLYIEKILISL), 146-166 (IAGSYAFWLIPALFGQAIVIP), 184-204 (AVTTLLFHVLVCWTLVFLFGL), 208-228 (GPAMATSVSFWFYAVILSCYV), 260-280 (AAMICLEWWLFEILILCSGLL), 289-309 (VLSICLTIETLHYVISAGVAA), 331-351 (VLAGLCLWIVESAFFSILLFT), 370-390 (VADLTPLLCLSFILDGFTAVL), 402-422 (IGAWNNTVSYYLVGAPVGIYL), and 433-453 (LWCGVVVGSTVQATILAIVTA).

Belongs to the multi antimicrobial extrusion (MATE) (TC 2.A.66.1) family. Ubiquitous. Highest expression in flowers and stems.

It localises to the cell membrane. Efflux carrier for plant-derived alkaloids, antibiotics, heavy metal and other toxic compounds. Involved in cadmium detoxification. Requires probably a proton-motive force for the efflux. The protein is Protein DETOXIFICATION 1 of Arabidopsis thaliana (Mouse-ear cress).